Reading from the N-terminus, the 446-residue chain is N-succinylarginine dihydrolase 2 (446 aa).

Substrate is bound by residues 20 to 29 (VGLSPGNLAS), N111, and 138 to 139 (HR). E175 is an active-site residue. R212 serves as a coordination point for substrate. The active site involves H246. Residues D248 and N361 each coordinate substrate. C367 functions as the Nucleophile in the catalytic mechanism.

It belongs to the succinylarginine dihydrolase family. In terms of assembly, homodimer.

It carries out the reaction N(2)-succinyl-L-arginine + 2 H2O + 2 H(+) = N(2)-succinyl-L-ornithine + 2 NH4(+) + CO2. It participates in amino-acid degradation; L-arginine degradation via AST pathway; L-glutamate and succinate from L-arginine: step 2/5. Its function is as follows. Catalyzes the hydrolysis of N(2)-succinylarginine into N(2)-succinylornithine, ammonia and CO(2). The chain is N-succinylarginine dihydrolase 2 from Caulobacter vibrioides (strain ATCC 19089 / CIP 103742 / CB 15) (Caulobacter crescentus).